A 186-amino-acid chain; its full sequence is Pyridoxal 5'-phosphate synthase subunit PdxT (186 aa).

46–48 lines the L-glutamine pocket; sequence GES. Residue Cys-78 is the Nucleophile of the active site. L-glutamine-binding positions include Arg-105 and 134-135; that span reads IR. Active-site charge relay system residues include His-170 and Glu-172.

The protein belongs to the glutaminase PdxT/SNO family. In the presence of PdxS, forms a dodecamer of heterodimers. Only shows activity in the heterodimer.

The catalysed reaction is aldehydo-D-ribose 5-phosphate + D-glyceraldehyde 3-phosphate + L-glutamine = pyridoxal 5'-phosphate + L-glutamate + phosphate + 3 H2O + H(+). The enzyme catalyses L-glutamine + H2O = L-glutamate + NH4(+). It functions in the pathway cofactor biosynthesis; pyridoxal 5'-phosphate biosynthesis. Catalyzes the hydrolysis of glutamine to glutamate and ammonia as part of the biosynthesis of pyridoxal 5'-phosphate. The resulting ammonia molecule is channeled to the active site of PdxS. This chain is Pyridoxal 5'-phosphate synthase subunit PdxT, found in Clostridium acetobutylicum (strain ATCC 824 / DSM 792 / JCM 1419 / IAM 19013 / LMG 5710 / NBRC 13948 / NRRL B-527 / VKM B-1787 / 2291 / W).